Consider the following 338-residue polypeptide: Glyceraldehyde-3-phosphate dehydrogenase (338 aa).

Residues 12 to 13 (RI), Asp34, and Arg79 contribute to the NAD(+) site. Residues 150-152 (SCT), Thr181, 210-211 (TG), and Arg233 each bind D-glyceraldehyde 3-phosphate. Catalysis depends on Cys151, which acts as the Nucleophile. An NAD(+)-binding site is contributed by Asn315.

The protein belongs to the glyceraldehyde-3-phosphate dehydrogenase family. Homotetramer.

It is found in the cytoplasm. The catalysed reaction is D-glyceraldehyde 3-phosphate + phosphate + NAD(+) = (2R)-3-phospho-glyceroyl phosphate + NADH + H(+). Its pathway is carbohydrate degradation; glycolysis; pyruvate from D-glyceraldehyde 3-phosphate: step 1/5. This Hypocrea atroviridis (Trichoderma atroviride) protein is Glyceraldehyde-3-phosphate dehydrogenase (gpd1).